A 238-amino-acid polypeptide reads, in one-letter code: MTSPRVVAVIPAAGVGSRMQADRPKQYLSLNGKTILEHTIDALLNHPLIDDVIVAISQGDEYFDQLGLRQKPIRVVDGGKERADSVLNGILSLDENDWALVHDAARPCVDDADISNLLSLIGSEDVTGGILATPVRDTMKRVKPSSNIISHTEDRNGLWHALTPQLFPAMLLKRALQEGLAQGVSITDEASAMEFAGHSVAMVSGSPANIKITHPADLPLAEFYLKQKFSAQGDSAKN.

The protein belongs to the IspD/TarI cytidylyltransferase family. IspD subfamily.

It carries out the reaction 2-C-methyl-D-erythritol 4-phosphate + CTP + H(+) = 4-CDP-2-C-methyl-D-erythritol + diphosphate. It functions in the pathway isoprenoid biosynthesis; isopentenyl diphosphate biosynthesis via DXP pathway; isopentenyl diphosphate from 1-deoxy-D-xylulose 5-phosphate: step 2/6. In terms of biological role, catalyzes the formation of 4-diphosphocytidyl-2-C-methyl-D-erythritol from CTP and 2-C-methyl-D-erythritol 4-phosphate (MEP). The chain is 2-C-methyl-D-erythritol 4-phosphate cytidylyltransferase from Alteromonas mediterranea (strain DSM 17117 / CIP 110805 / LMG 28347 / Deep ecotype).